Consider the following 312-residue polypeptide: Olfactory receptor 2T10 (312 aa).

Topologically, residues 1–25 (MRLANQTLGGDFFLLGIFSQISHPG) are extracellular. Asn-5 carries an N-linked (GlcNAc...) asparagine glycan. A helical transmembrane segment spans residues 26–49 (RLCLLIFSIFLMAVSWNITLILLI). The Cytoplasmic portion of the chain corresponds to 50–57 (HIDSSLHT). Residues 58 to 79 (PMYFFINQLSLIDLTYISVTVP) form a helical membrane-spanning segment. The Extracellular segment spans residues 80–100 (KMLVNQLAKDKTISVLGCGTQ). Cysteines 97 and 189 form a disulfide. A helical membrane pass occupies residues 101-120 (MYFYLQLGGAECCLLAAMAY). Over 121 to 139 (DRYVAICHPLRYSVLMSHR) the chain is Cytoplasmic. The chain crosses the membrane as a helical span at residues 140–158 (VCLLLASGCWFVGSVDGFM). Residues 159–195 (LTPIAMSFPFCRSHEIQHFFCEVPAVLKLSCSDTSLY) are Extracellular-facing. The chain crosses the membrane as a helical span at residues 196–219 (KIFMYLCCVIMLLIPVTVISVSYY). Residues 220–236 (YIILTIHKMNSVEGRKK) lie on the Cytoplasmic side of the membrane. Residues 237 to 259 (AFTTCSSHITVVSLFYGAAIYNY) traverse the membrane as a helical segment. The Extracellular portion of the chain corresponds to 260–272 (MLPSSYQTPEKDM). Residues 273 to 292 (MSSFFYTILTPVLNPIIYSF) form a helical membrane-spanning segment. At 293-312 (RNKDVTRALKKMLSVQKPPY) the chain is on the cytoplasmic side.

It belongs to the G-protein coupled receptor 1 family.

It localises to the cell membrane. In terms of biological role, odorant receptor. The protein is Olfactory receptor 2T10 (OR2T10) of Homo sapiens (Human).